A 599-amino-acid polypeptide reads, in one-letter code: Replication protein E1 (599 aa).

The short motif at 78 to 80 is the Nuclear localization signal element; it reads KRK. Ser-84 and Ser-93 each carry phosphoserine; by host. The Nuclear export signal signature appears at 92–101; that stretch reads LSPQLQAVKI. Residues 124–140 are compositionally biased toward polar residues; it reads NSLTQVESESQAGPSSQ. Residues 124–144 form a disordered region; sequence NSLTQVESESQAGPSSQDGGG. The segment at 139–303 is DNA-binding region; sequence SQDGGGDINL…LVSHQAATTA (165 aa). One can recognise an SF3 helicase domain in the interval 402–552; it reads VNILSFLIVL…MPILDDGSPM (151 aa). 428-435 is an ATP binding site; the sequence is GPPDTGKS. A Glycyl lysine isopeptide (Lys-Gly) (interchain with G-Cter in SUMO) cross-link involves residue Lys-509. The tract at residues 575–599 is disordered; the sequence is DPEEENNGVPSRTFRCTSRSNSDSY. Polar residues predominate over residues 582–599; sequence GVPSRTFRCTSRSNSDSY.

This sequence belongs to the papillomaviridae E1 protein family. In terms of assembly, can form hexamers. Interacts with E2 protein; this interaction increases E1 DNA binding specificity. Interacts with host DNA polymerase subunit POLA2. Interacts with host single stranded DNA-binding protein RPA1. Interacts with host TOP1; this interaction stimulates the enzymatic activity of TOP1. In terms of processing, phosphorylated. Post-translationally, sumoylated.

Its subcellular location is the host nucleus. It catalyses the reaction Couples ATP hydrolysis with the unwinding of duplex DNA by translocating in the 3'-5' direction.. It carries out the reaction ATP + H2O = ADP + phosphate + H(+). In terms of biological role, ATP-dependent DNA 3'-5' helicase required for initiation of viral DNA replication. It forms a complex with the viral E2 protein. The E1-E2 complex binds to the replication origin which contains binding sites for both proteins. During the initial step, a dimer of E1 interacts with a dimer of protein E2 leading to a complex that binds the viral origin of replication with high specificity. Then, a second dimer of E1 displaces the E2 dimer in an ATP-dependent manner to form the E1 tetramer. Following this, two E1 monomers are added to each half of the site, which results in the formation of two E1 trimers on the viral ori. Subsequently, two hexamers will be created. The double hexamer acts as a bi-directional helicase machinery and unwinds the viral DNA and then recruits the host DNA polymerase to start replication. This Homo sapiens (Human) protein is Replication protein E1.